Here is a 223-residue protein sequence, read N- to C-terminus: 7-cyano-7-deazaguanine synthase (223 aa).

ATP is bound at residue 10-20 (FSGGQDSTTCL). 4 residues coordinate Zn(2+): C188, C197, C200, and C203.

This sequence belongs to the QueC family. It depends on Zn(2+) as a cofactor.

It carries out the reaction 7-carboxy-7-deazaguanine + NH4(+) + ATP = 7-cyano-7-deazaguanine + ADP + phosphate + H2O + H(+). The protein operates within purine metabolism; 7-cyano-7-deazaguanine biosynthesis. Functionally, catalyzes the ATP-dependent conversion of 7-carboxy-7-deazaguanine (CDG) to 7-cyano-7-deazaguanine (preQ(0)). This chain is 7-cyano-7-deazaguanine synthase, found in Phocaeicola vulgatus (strain ATCC 8482 / DSM 1447 / JCM 5826 / CCUG 4940 / NBRC 14291 / NCTC 11154) (Bacteroides vulgatus).